A 976-amino-acid chain; its full sequence is 3-hydroxy-3-methylglutaryl-coenzyme A reductase (976 aa).

The Lumenal portion of the chain corresponds to 1-36 (MDHEGCQGQHPQQCCQWVSNAWSEFLDLLKNAETLD). An SSD domain is found at 36–217 (DIVIMLLGYI…FTFYTAILSI (182 aa)). Residues 37-57 (IVIMLLGYIAMHLTFVSLFLS) traverse the membrane as a helical segment. At 58–64 (MRKMGSK) the chain is on the cytoplasmic side. A helical transmembrane segment spans residues 65–85 (FWLGICTLFSSVFAFLFGLVV). At 86-90 (TTKLG) the chain is on the lumenal side. A helical transmembrane segment spans residues 91-111 (VPISVILLSEGLPFLVVTIGF). Topologically, residues 112 to 169 (EKNIVLTRAVMSHAIEHRRIQAQNSKSGKRSPDGSTQNMIQYAVQAAIKEKGFEIIRD) are cytoplasmic. Residues 170-190 (YAIEIVILVIGAASGVQGGLQ) traverse the membrane as a helical segment. At 191-193 (QFC) the chain is on the lumenal side. The chain crosses the membrane as a helical span at residues 194–214 (FLAAWTLFFDFILLFTFYTAI). The Cytoplasmic segment spans residues 215–272 (LSIKLRSTVSSVMSICVWPLRMMASRRVAENVAKGDDELNRVRGDAPLFGRKSSSIPK). The chain crosses the membrane as a helical span at residues 273–293 (FKVLMILGFIFVNIVNICSIP). Residues 294–401 (FRNPSSMSTI…GGILKSLEDP (108 aa)) lie on the Lumenal side of the membrane. Residues 402–422 (VLSKWIVIALALSVALNGYLF) form a helical membrane-spanning segment. The Cytoplasmic segment spans residues 423-976 (NVARWGIKDP…RYSEVKAIDE (554 aa)). Glu-618 functions as the Charge relay system in the catalytic mechanism. Position 624–630 (624–630 (SASRGCK)) interacts with CoA. NADP(+) is bound by residues 685–687 (SRF) and 712–720 (DAMGMNMIS). Residue Lys-752 is the Charge relay system of the active site. 781 to 783 (VLK) contacts CoA. The active-site Charge relay system is the Asp-828. 923 to 924 (AH) lines the CoA pocket. The active-site Proton donor is the His-924. The tract at residues 926–954 (QHNRSAAPSRSTTPGSSHDARLTGHDQCP) is disordered. NADP(+) is bound at residue 928-929 (NR). The segment covering 928-941 (NRSAAPSRSTTPGS) has biased composition (polar residues). Basic and acidic residues predominate over residues 943–953 (HDARLTGHDQC).

The protein belongs to the HMG-CoA reductase family.

It localises to the endoplasmic reticulum membrane. It carries out the reaction (R)-mevalonate + 2 NADP(+) + CoA = (3S)-3-hydroxy-3-methylglutaryl-CoA + 2 NADPH + 2 H(+). It participates in metabolic intermediate biosynthesis; (R)-mevalonate biosynthesis; (R)-mevalonate from acetyl-CoA: step 3/3. Its function is as follows. HMG-CoA reductase; part of the first module of ergosterol biosynthesis pathway that includes the early steps of the pathway, conserved across all eukaryotes, and which results in the formation of mevalonate from acetyl-coenzyme A (acetyl-CoA). In this module, the cytosolic acetyl-CoA acetyltransferase catalyzes the formation of acetoacetyl-CoA. The hydroxymethylglutaryl-CoA synthase then condenses acetyl-CoA with acetoacetyl-CoA to form HMG-CoA. The rate-limiting step of the early module is the reduction to mevalonate by the 3-hydroxy-3-methylglutaryl-coenzyme A (HMG-CoA) reductase HMGR. This is 3-hydroxy-3-methylglutaryl-coenzyme A reductase from Fusarium fujikuroi (Bakanae and foot rot disease fungus).